The following is a 72-amino-acid chain: Large ribosomal subunit protein bL31 (72 aa).

The protein belongs to the bacterial ribosomal protein bL31 family. Type A subfamily. Part of the 50S ribosomal subunit.

Binds the 23S rRNA. This is Large ribosomal subunit protein bL31 from Maricaulis maris (strain MCS10) (Caulobacter maris).